The chain runs to 302 residues: 4-hydroxy-tetrahydrodipicolinate synthase (302 aa).

Pyruvate is bound at residue Thr-57. Tyr-145 functions as the Proton donor/acceptor in the catalytic mechanism. The active-site Schiff-base intermediate with substrate is the Lys-173. Ile-213 serves as a coordination point for pyruvate.

The protein belongs to the DapA family. As to quaternary structure, homotetramer; dimer of dimers.

It is found in the cytoplasm. It carries out the reaction L-aspartate 4-semialdehyde + pyruvate = (2S,4S)-4-hydroxy-2,3,4,5-tetrahydrodipicolinate + H2O + H(+). Its pathway is amino-acid biosynthesis; L-lysine biosynthesis via DAP pathway; (S)-tetrahydrodipicolinate from L-aspartate: step 3/4. Functionally, catalyzes the condensation of (S)-aspartate-beta-semialdehyde [(S)-ASA] and pyruvate to 4-hydroxy-tetrahydrodipicolinate (HTPA). This Mycolicibacterium gilvum (strain PYR-GCK) (Mycobacterium gilvum (strain PYR-GCK)) protein is 4-hydroxy-tetrahydrodipicolinate synthase.